The primary structure comprises 303 residues: tRNA dimethylallyltransferase (303 aa).

An ATP-binding site is contributed by 16–23 (GPTASGKS). 18–23 (TASGKS) serves as a coordination point for substrate. Residues 41–44 (DSMQ) are interaction with substrate tRNA. Residues 141–161 (AEALHGELSARDPETAGRVRP) form a disordered region. An interaction with substrate tRNA region spans residues 165–169 (QRIVR).

This sequence belongs to the IPP transferase family. In terms of assembly, monomer. Mg(2+) is required as a cofactor.

It catalyses the reaction adenosine(37) in tRNA + dimethylallyl diphosphate = N(6)-dimethylallyladenosine(37) in tRNA + diphosphate. Catalyzes the transfer of a dimethylallyl group onto the adenine at position 37 in tRNAs that read codons beginning with uridine, leading to the formation of N6-(dimethylallyl)adenosine (i(6)A). This is tRNA dimethylallyltransferase from Rhizobium meliloti (strain 1021) (Ensifer meliloti).